Consider the following 103-residue polypeptide: Small ribosomal subunit protein uS10 (103 aa).

Belongs to the universal ribosomal protein uS10 family. As to quaternary structure, part of the 30S ribosomal subunit.

Functionally, involved in the binding of tRNA to the ribosomes. In Shewanella denitrificans (strain OS217 / ATCC BAA-1090 / DSM 15013), this protein is Small ribosomal subunit protein uS10.